The sequence spans 241 residues: 2-C-methyl-D-erythritol 4-phosphate cytidylyltransferase (241 aa).

This sequence belongs to the IspD/TarI cytidylyltransferase family. IspD subfamily.

The catalysed reaction is 2-C-methyl-D-erythritol 4-phosphate + CTP + H(+) = 4-CDP-2-C-methyl-D-erythritol + diphosphate. It functions in the pathway isoprenoid biosynthesis; isopentenyl diphosphate biosynthesis via DXP pathway; isopentenyl diphosphate from 1-deoxy-D-xylulose 5-phosphate: step 2/6. Functionally, catalyzes the formation of 4-diphosphocytidyl-2-C-methyl-D-erythritol from CTP and 2-C-methyl-D-erythritol 4-phosphate (MEP). The sequence is that of 2-C-methyl-D-erythritol 4-phosphate cytidylyltransferase from Alkaliphilus metalliredigens (strain QYMF).